The sequence spans 490 residues: Betaine aldehyde dehydrogenase (490 aa).

Residues Thr26, Ile27, and Asp93 each coordinate K(+). 150–152 (GAW) provides a ligand contact to NAD(+). Residue Lys162 is the Charge relay system of the active site. 176–179 (KPSE) is a binding site for NAD(+). Val180 is a K(+) binding site. An NAD(+)-binding site is contributed by 230–233 (GVAS). A K(+)-binding site is contributed by Leu246. Catalysis depends on Glu252, which acts as the Proton acceptor. NAD(+)-binding residues include Gly254, Cys286, and Glu387. The active-site Nucleophile is the Cys286. Cys286 carries the post-translational modification Cysteine sulfenic acid (-SOH). Lys457 and Gly460 together coordinate K(+). The active-site Charge relay system is the Glu464.

The protein belongs to the aldehyde dehydrogenase family. As to quaternary structure, dimer of dimers. K(+) is required as a cofactor.

It carries out the reaction betaine aldehyde + NAD(+) + H2O = glycine betaine + NADH + 2 H(+). Its pathway is amine and polyamine biosynthesis; betaine biosynthesis via choline pathway; betaine from betaine aldehyde: step 1/1. Involved in the biosynthesis of the osmoprotectant glycine betaine. Catalyzes the irreversible oxidation of betaine aldehyde to the corresponding acid. In Escherichia coli O6:K15:H31 (strain 536 / UPEC), this protein is Betaine aldehyde dehydrogenase.